The primary structure comprises 335 residues: Succinylglutamate desuccinylase (335 aa).

Positions 59, 62, and 151 each coordinate Zn(2+). Glu215 is a catalytic residue.

This sequence belongs to the AspA/AstE family. Succinylglutamate desuccinylase subfamily. Zn(2+) serves as cofactor.

The catalysed reaction is N-succinyl-L-glutamate + H2O = L-glutamate + succinate. It participates in amino-acid degradation; L-arginine degradation via AST pathway; L-glutamate and succinate from L-arginine: step 5/5. Functionally, transforms N(2)-succinylglutamate into succinate and glutamate. This chain is Succinylglutamate desuccinylase, found in Pseudomonas putida (strain GB-1).